The sequence spans 593 residues: MTADNALYIPPYKADDQDVVVELNNRFGAEAFTAQPTRTGMPVLWVERARLFEILTFLRNVPKPYSMLYDLHGVDERLRTNRRGLPGADFTVFYHLLSIERNSDVMIKVALSESDLSVPTITSIWPNANWYEREVWDMFGIDFPGHPHLSRIMMPPTWEGHPLRKDFPARATEFDPYSLTLAKQQLEEEAARFRPEDWGMKRSGQNEDYMFLNLGPNHPSAHGAFRIILQLDGEEIVDCVPDIGYHHRGAEKMAERQSWHSFIPYTDRIDYLGGVMNNLPYVLSVEKLAGIKVPEKVDVIRIMMAEFFRITSHLLFLGTYIQDVGAMTPVFFTFTDRQKAYTVIEAITGFRLHPAWYRIGGVAHDLPRGWEKLVKDFVDWLPKRLDEYTKAALQNSILKGRTVGVAAYNTKEALEWGVTGAGLRSTGCDFDLRKARPYSGYENFEFEVPLAANGDAYDRCMVRVEEMRQSIKIIDQCMRNMPEGPYKADHPLTTPPPKERTLQHIETLITHFLQVSWGPVMPANESFQMIEATKGINSYYLTSDGGTMSYRTRIRTPSFPHLQQIPSVIQGSMVADLIAYLGSIDFVMADVDR.

Residues 1 to 184 (MTADNALYIP…DPYSLTLAKQ (184 aa)) are NADH dehydrogenase I subunit C. The interval 208–593 (DYMFLNLGPN…IDFVMADVDR (386 aa)) is NADH dehydrogenase I subunit D.

This sequence in the N-terminal section; belongs to the complex I 30 kDa subunit family. In the C-terminal section; belongs to the complex I 49 kDa subunit family. As to quaternary structure, NDH-1 is composed of 13 different subunits. Subunits NuoB, CD, E, F, and G constitute the peripheral sector of the complex.

It is found in the cell inner membrane. The catalysed reaction is a quinone + NADH + 5 H(+)(in) = a quinol + NAD(+) + 4 H(+)(out). Its function is as follows. NDH-1 shuttles electrons from NADH, via FMN and iron-sulfur (Fe-S) centers, to quinones in the respiratory chain. The immediate electron acceptor for the enzyme in this species is believed to be ubiquinone. Couples the redox reaction to proton translocation (for every two electrons transferred, four hydrogen ions are translocated across the cytoplasmic membrane), and thus conserves the redox energy in a proton gradient. The polypeptide is NADH-quinone oxidoreductase subunit C/D (Pseudomonas syringae pv. tomato (strain ATCC BAA-871 / DC3000)).